Here is a 478-residue protein sequence, read N- to C-terminus: tRNA (adenine(58)-N(1))-methyltransferase non-catalytic subunit TRM6 (478 aa).

The interval 456 to 478 is disordered; the sequence is SENATAADSSEKLAEHGAKKQKI. Residues 464-478 are compositionally biased toward basic and acidic residues; sequence SSEKLAEHGAKKQKI.

The protein belongs to the TRM6/GCD10 family. As to quaternary structure, heterotetramer; composed of two copies of TRM6/GCD10 and two copies of TRM61/GCD14.

It is found in the nucleus. In terms of biological role, substrate-binding subunit of tRNA (adenine-N(1)-)-methyltransferase, which catalyzes the formation of N(1)-methyladenine at position 58 (m1A58) in initiator methionyl-tRNA. Also required for repression of GCN4 mRNA translation by the upstream open reading frames (uORFs) under conditions of amino acid sufficiency. This is tRNA (adenine(58)-N(1))-methyltransferase non-catalytic subunit TRM6 (GCD10) from Saccharomyces cerevisiae (strain ATCC 204508 / S288c) (Baker's yeast).